Consider the following 296-residue polypeptide: Sulfotransferase 1C2 (296 aa).

49 to 54 (KSGTTW) serves as a coordination point for 3'-phosphoadenylyl sulfate. Substrate is bound at residue 107–109 (RTH). The active-site Proton acceptor is histidine 109. Residues arginine 131, serine 139, tyrosine 194, and 228–233 (TSFEKM) each bind 3'-phosphoadenylyl sulfate. Residue serine 139 is modified to Phosphoserine. Phosphoserine is present on serine 254. 256 to 260 (FMRKG) contacts 3'-phosphoadenylyl sulfate.

This sequence belongs to the sulfotransferase 1 family. Highly expressed in kidney and at lower levels in stomach and liver. More specifically found in the epithelia of proximal tubules of the kidney, of the bile duct, of the gastric mucosa, and in hepatocytes.

It is found in the cytoplasm. The protein resides in the lysosome. It localises to the mitochondrion. The enzyme catalyses a phenol + 3'-phosphoadenylyl sulfate = an aryl sulfate + adenosine 3',5'-bisphosphate + H(+). The catalysed reaction is cholesterol + 3'-phosphoadenylyl sulfate = cholesterol sulfate + adenosine 3',5'-bisphosphate + H(+). In terms of biological role, sulfotransferase that utilizes 3'-phospho-5'-adenylyl sulfate (PAPS) to catalyze the sulfate conjugation of phenolic compounds. Does not transfer sulfate to steroids, dopamine, acetaminophen, or alpha-naphthol. Except in mitochondria, where it can add sulfate to cholesterol producing cholesterol sulfate, which alters mitochondrial membrane organization, and impacts protein complex mobility increasing state-III respiration, thereby modulating mitochondrial respiration. Catalyzes the sulfation of the carcinogenic N-hydroxy-2-acetylaminofluorene leading to highly reactive intermediates capable of forming DNA adducts, potentially resulting in mutagenesis. The sequence is that of Sulfotransferase 1C2 (Sult1c2) from Rattus norvegicus (Rat).